Reading from the N-terminus, the 389-residue chain is Na(+)/H(+) antiporter NhaA (389 aa).

11 helical membrane-spanning segments follow: residues 17 to 37 (ILLL…LAGL), 59 to 79 (LLLW…GLEV), 95 to 115 (SLPT…YLLF), 124 to 144 (VGWA…MALL), 154 to 174 (VFLL…IALF), 177 to 197 (SDLS…LVAL), 213 to 233 (LVLW…GVII), 261 to 281 (FLIL…NMSL), 287 to 307 (PVPV…VMLF), 328 to 348 (IAPV…IASL), and 363 to 383 (LGTL…LSKV).

This sequence belongs to the NhaA Na(+)/H(+) (TC 2.A.33) antiporter family.

The protein localises to the cell inner membrane. It carries out the reaction Na(+)(in) + 2 H(+)(out) = Na(+)(out) + 2 H(+)(in). Functionally, na(+)/H(+) antiporter that extrudes sodium in exchange for external protons. This chain is Na(+)/H(+) antiporter NhaA, found in Shewanella sp. (strain ANA-3).